A 431-amino-acid polypeptide reads, in one-letter code: Phosphoribosylamine--glycine ligase (431 aa).

Positions 107 to 315 (RWLMEEYKIP…LVEIGEEIVD (209 aa)) constitute an ATP-grasp domain. 134–193 (IDDFGRPVVVKPLGLTGGKGVKVVGYQLKDNEEAKAYAEELIKRDGKVLIEERTDGVEFT) lines the ATP pocket. The Mg(2+) site is built by Q273, E285, and N287. Mn(2+) contacts are provided by Q273, E285, and N287.

The protein belongs to the GARS family. Requires Mg(2+) as cofactor. Mn(2+) is required as a cofactor.

It catalyses the reaction 5-phospho-beta-D-ribosylamine + glycine + ATP = N(1)-(5-phospho-beta-D-ribosyl)glycinamide + ADP + phosphate + H(+). Its pathway is purine metabolism; IMP biosynthesis via de novo pathway; N(1)-(5-phospho-D-ribosyl)glycinamide from 5-phospho-alpha-D-ribose 1-diphosphate: step 2/2. The polypeptide is Phosphoribosylamine--glycine ligase (Thermococcus kodakarensis (strain ATCC BAA-918 / JCM 12380 / KOD1) (Pyrococcus kodakaraensis (strain KOD1))).